The chain runs to 990 residues: DNA polymerase (990 aa).

The tract at residues 936-976 is disordered; the sequence is PSDDAARKRARAGPSALRKQKAASNDEDSSDEDDEDCSQAI. Residues 960 to 972 show a composition bias toward acidic residues; it reads NDEDSSDEDDEDC.

This sequence belongs to the DNA polymerase type-B family.

The catalysed reaction is DNA(n) + a 2'-deoxyribonucleoside 5'-triphosphate = DNA(n+1) + diphosphate. Functionally, replicates the viral genome, host DNA polymerases cannot substitute for the viral enzyme in this process. This chain is DNA polymerase (POL), found in Choristoneura fumiferana (Spruce budworm moth).